A 246-amino-acid chain; its full sequence is MMTSSHQSNTTGFKPRRIKTTAKPPRQINNKEPSPATQPVLKCPRCDSVNTKFCYYNNYSLSQPRHYCKNCRRYWTRGGALRNVPIGGSTRNKNKPCSLQVISSPPLFSNGTSSASRELVRNHPSTAMMMMSSGGFSGYMFPLDPNFNLASSSIESLSSFNQDLHQKLQQQRLVTSMFLQDSLPVNEKTVMFQNVELIPPSTVTTDWVFDRFATGGGATSGNHEDNDDGEGNLGNWFHNANNNALL.

Composition is skewed to polar residues over residues Met1–Gly12 and Gln27–Thr37. The interval Met1 to Pro39 is disordered. The Dof-type zinc finger occupies Leu41 to Lys95. The Zn(2+) site is built by Cys43, Cys46, Cys68, and Cys71. The segment at Gly216 to Asn235 is disordered.

Interacts with ZFP2. As to expression, highly expressed at the base of all organs of the flower, especially in the abscission zone (AZ) of petals, stamens and sepals. Expressed at low levels in sepals, filaments, stigmatic papillae, tips of young siliques, and at the base of pedicels and leaf trichomes.

Its subcellular location is the nucleus. Functionally, transcription factor that binds specifically to a 5'-AA[AG]G-3' consensus core sequence. Involved in the negative regulation of floral organ abscission by binding to the typical DOF 5'-AAAG-3' sequences in the promoter of ADPG2/PGAZAT, and by down-regulating its expression. ADPG2/PGAZAT is an abscission-related and cell wall hydrolyzing polygalacturonase. May act through the interaction with ZFP2, an abscission-related transcription factor. This Arabidopsis thaliana (Mouse-ear cress) protein is Dof zinc finger protein DOF4.7.